Consider the following 244-residue polypeptide: PHD finger protein ALFIN-LIKE 2 (244 aa).

Positions 137–148 (LSDRKHGRDNKS) are enriched in basic and acidic residues. The tract at residues 137 to 178 (LSDRKHGRDNKSGADNGSKSRHSGKRANDVQTKTSRPAVVDD) is disordered. Residues 187–239 (ETLCGTCGGRYNANEFWIGCDICERWFHGKCVRITPAKAEHIKHYKCPDCSSS) form a PHD-type zinc finger.

It belongs to the Alfin family. As to quaternary structure, interacts with H3K4me3 and to a lesser extent with H3K4me2.

The protein localises to the nucleus. Functionally, histone-binding component that specifically recognizes H3 tails trimethylated on 'Lys-4' (H3K4me3), which mark transcription start sites of virtually all active genes. This is PHD finger protein ALFIN-LIKE 2 from Oryza sativa subsp. indica (Rice).